Here is a 732-residue protein sequence, read N- to C-terminus: X-ray repair cross-complementing protein 5 (732 aa).

The VWFA domain occupies 9–231 (AVVLCMDVGF…DEIYSFSESL (223 aa)). The interval 138–165 (LSSRFSKSQLDIIIHSLKKCDISLQFFL) is leucine-zipper. K144 is subject to N6-acetyllysine. K195 is covalently cross-linked (Glycyl lysine isopeptide (Lys-Gly) (interchain with G-Cter in SUMO2)). A Ku domain is found at 253-452 (IGSNLSIRIA…KYAPTEAQLN (200 aa)). Residues S255 and S258 each carry the phosphoserine modification. The residue at position 265 (K265) is an N6-acetyllysine. S318 bears the Phosphoserine mark. N6-acetyllysine is present on K332. Glycyl lysine isopeptide (Lys-Gly) (interchain with G-Cter in SUMO2) cross-links involve residues K532 and K534. T535 carries the post-translational modification Phosphothreonine. Residues K566 and K568 each participate in a glycyl lysine isopeptide (Lys-Gly) (interchain with G-Cter in SUMO2) cross-link. Residues S577, S579, and S580 each carry the phosphoserine; by PRKDC modification. N6-acetyllysine is present on residues K660 and K665. Residues K669 and K688 each participate in a glycyl lysine isopeptide (Lys-Gly) (interchain with G-Cter in SUMO2) cross-link. T715 carries the post-translational modification Phosphothreonine; by PRKDC. The EEXXXDL motif signature appears at 720–728 (EEGGDVDDL).

Belongs to the ku80 family. In terms of assembly, heterodimer composed of XRCC5/Ku80 and XRCC6/Ku70; heterodimerization stabilizes XRCC5 protein. Component of the core long-range non-homologous end joining (NHEJ) complex (also named DNA-PK complex) composed of PRKDC, LIG4, XRCC4, XRCC6/Ku70, XRCC5/Ku86 and NHEJ1/XLF. Additional component of the NHEJ complex includes PAXX. Following autophosphorylation, PRKDC dissociates from DNA, leading to formation of the short-range NHEJ complex, composed of LIG4, XRCC4, XRCC6/Ku70, XRCC5/Ku86 and NHEJ1/XLF. The XRCC5-XRCC6 dimer also associates with NAA15, and this complex displays DNA binding activity towards the osteocalcin FGF response element (OCFRE). In addition, XRCC5 binds to the osteoblast-specific transcription factors MSX2 and RUNX2. Interacts with ELF3. Interacts with APLF (via KBM motif). The XRCC5/XRCC6 dimer associates in a DNA-dependent manner with APEX1. Identified in a complex with DEAF1 and XRCC6. Interacts with NR4A3; the DNA-dependent protein kinase complex DNA-PK phosphorylates and activates NR4A3 and prevents NR4A3 ubiquitinylation and degradation. Interacts with RNF138. Interacts with CYREN isoform 1 (CYREN-1) and isoform 4 (CYREN-2) (via KBM motif). Interacts with WRN (via KBM motif). Interacts (via N-terminus) with HSF1 (via N-terminus); this interaction is direct and prevents XRCC5/XRCC6 heterodimeric binding and non-homologous end joining (NHEJ) repair activities induced by ionizing radiation (IR). Interacts with DHX9; this interaction occurs in a RNA-dependent manner. Part of the HDP-RNP complex composed of at least HEXIM1, PRKDC, XRCC5, XRCC6, paraspeckle proteins (SFPQ, NONO, PSPC1, RBM14, and MATR3) and NEAT1 RNA. Interacts with ERCC6. The XRCC5-XRCC6 dimer associates with ALKBH2. Interacts with TPRN; TPRN interacts with a number of DNA damage response proteins, is recruited to sites of DNA damage and may play a role in DNA damage repair. Interacts with ERCC6L2. (Microbial infection) Interacts with human T-cell leukemia virus 1/HTLV-1 protein HBZ. ADP-ribosylated by PARP3. In terms of processing, phosphorylated on serine residues. Phosphorylation by PRKDC may enhance helicase activity. Post-translationally, sumoylated. Ubiquitinated by RNF8 via 'Lys-48'-linked ubiquitination following DNA damage, leading to its degradation and removal from DNA damage sites. Ubiquitinated by RNF138, leading to remove the Ku complex from DNA breaks.

It localises to the nucleus. Its subcellular location is the nucleolus. The protein resides in the chromosome. In terms of biological role, single-stranded DNA-dependent ATP-dependent helicase that plays a key role in DNA non-homologous end joining (NHEJ) by recruiting DNA-PK to DNA. Required for double-strand break repair and V(D)J recombination. Also has a role in chromosome translocation. The DNA helicase II complex binds preferentially to fork-like ends of double-stranded DNA in a cell cycle-dependent manner. It works in the 3'-5' direction. During NHEJ, the XRCC5-XRRC6 dimer performs the recognition step: it recognizes and binds to the broken ends of the DNA and protects them from further resection. Binding to DNA may be mediated by XRCC6. The XRCC5-XRRC6 dimer acts as a regulatory subunit of the DNA-dependent protein kinase complex DNA-PK by increasing the affinity of the catalytic subunit PRKDC to DNA by 100-fold. The XRCC5-XRRC6 dimer is probably involved in stabilizing broken DNA ends and bringing them together. The assembly of the DNA-PK complex to DNA ends is required for the NHEJ ligation step. The XRCC5-XRRC6 dimer probably also acts as a 5'-deoxyribose-5-phosphate lyase (5'-dRP lyase), by catalyzing the beta-elimination of the 5' deoxyribose-5-phosphate at an abasic site near double-strand breaks. XRCC5 probably acts as the catalytic subunit of 5'-dRP activity, and allows to 'clean' the termini of abasic sites, a class of nucleotide damage commonly associated with strand breaks, before such broken ends can be joined. The XRCC5-XRRC6 dimer together with APEX1 acts as a negative regulator of transcription. In association with NAA15, the XRCC5-XRRC6 dimer binds to the osteocalcin promoter and activates osteocalcin expression. As part of the DNA-PK complex, involved in the early steps of ribosome assembly by promoting the processing of precursor rRNA into mature 18S rRNA in the small-subunit processome. Binding to U3 small nucleolar RNA, recruits PRKDC and XRCC5/Ku86 to the small-subunit processome. Plays a role in the regulation of DNA virus-mediated innate immune response by assembling into the HDP-RNP complex, a complex that serves as a platform for IRF3 phosphorylation and subsequent innate immune response activation through the cGAS-STING pathway. The protein is X-ray repair cross-complementing protein 5 (XRCC5) of Homo sapiens (Human).